Here is a 349-residue protein sequence, read N- to C-terminus: Small ribosomal subunit protein uS2 (349 aa).

This sequence belongs to the universal ribosomal protein uS2 family.

The sequence is that of Small ribosomal subunit protein uS2 from Methylobacterium sp. (strain 4-46).